Here is a 105-residue protein sequence, read N- to C-terminus: Urease subunit beta (105 aa).

This sequence belongs to the urease beta subunit family. Heterotrimer of UreA (gamma), UreB (beta) and UreC (alpha) subunits. Three heterotrimers associate to form the active enzyme.

The protein resides in the cytoplasm. The enzyme catalyses urea + 2 H2O + H(+) = hydrogencarbonate + 2 NH4(+). It functions in the pathway nitrogen metabolism; urea degradation; CO(2) and NH(3) from urea (urease route): step 1/1. This chain is Urease subunit beta, found in Shewanella halifaxensis (strain HAW-EB4).